A 354-amino-acid polypeptide reads, in one-letter code: Zinc finger protein 346 (354 aa).

Matrin-type zinc fingers lie at residues T34 to R64, K95 to L125, K165 to K195, and F232 to S262. Residues C36, C39, H52, H58, C97, C100, H113, and H119 each contribute to the Zn(2+) site. The segment at M263 to G343 is disordered. 2 stretches are compositionally biased toward low complexity: residues G270–A289 and G310–L323. Residues M324 to S333 show a composition bias toward pro residues.

It is found in the nucleus. The protein resides in the cytoplasm. In terms of biological role, binds preferentially to dsRNA, but also to RNA-DNA hybrids. The polypeptide is Zinc finger protein 346 (Xenopus tropicalis (Western clawed frog)).